Reading from the N-terminus, the 182-residue chain is Meiotically up-regulated gene 82 protein (182 aa).

A disordered region spans residues 161-182 (EKRLSEKKYKQKKKTQRRITMD). Over residues 169–182 (YKQKKKTQRRITMD) the composition is skewed to basic residues.

The protein belongs to the prokaryotic/mitochondrial release factor family.

It is found in the mitochondrion. Its function is as follows. Has a role in meiosis. This chain is Meiotically up-regulated gene 82 protein (mug82), found in Schizosaccharomyces pombe (strain 972 / ATCC 24843) (Fission yeast).